A 383-amino-acid chain; its full sequence is Podocin (383 aa).

Over residues 1 to 41 the composition is skewed to basic and acidic residues; it reads MERRARSSSRESRGRGGRTPHKENKRAKAERSGGGRGRQEA. Residues 1-76 form a disordered region; it reads MERRARSSSR…VDEVRGSGEE (76 aa). At 1 to 102 the chain is on the cytoplasmic side; it reads MERRARSSSR…TKSSGLGACE (102 aa). Cys101 carries S-palmitoyl cysteine lipidation. The stretch at 103–123 is an intramembrane region; the sequence is WLLVLISLLFIIMTFPFSIWF. Residues 124-383 are Cytoplasmic-facing; that stretch reads CVKVVQEYER…NPKKKDSPML (260 aa). Gln287 carries N-linked (GlcNAc...) asparagine glycosylation. The disordered stretch occupies residues 355-383; the sequence is NRTQGSLPFPSPSKPVEPLNPKKKDSPML. The segment covering 374–383 has biased composition (basic and acidic residues); that stretch reads NPKKKDSPML.

Belongs to the band 7/mec-2 family. Interacts with nephrin/NPHS1 and KIRREL1. Interacts directly with CD2AP. Interacts with DDN. In terms of processing, glycosylated. Almost exclusively expressed in the podocytes of fetal and mature kidney glomeruli.

The protein resides in the cell membrane. It is found in the endoplasmic reticulum. Plays a role in the regulation of glomerular permeability, acting probably as a linker between the plasma membrane and the cytoskeleton. This is Podocin (NPHS2) from Homo sapiens (Human).